Here is a 187-residue protein sequence, read N- to C-terminus: Lipid A acyltransferase PagP (187 aa).

The first 26 residues, 1-26 (MIVAKKYFLVLSFLFVQFALLPQAFS), serve as a signal peptide directing secretion. Active-site residues include His-59, Asp-102, and Ser-103.

Belongs to the lipid A palmitoyltransferase family. Homodimer.

The protein localises to the cell outer membrane. The enzyme catalyses a lipid A + a 1,2-diacyl-sn-glycero-3-phosphocholine = a hepta-acyl lipid A + a 2-acyl-sn-glycero-3-phosphocholine. It carries out the reaction a lipid IVA + a 1,2-diacyl-sn-glycero-3-phosphocholine = a lipid IVB + a 2-acyl-sn-glycero-3-phosphocholine. It catalyses the reaction a lipid IIA + a 1,2-diacyl-sn-glycero-3-phosphocholine = a lipid IIB + a 2-acyl-sn-glycero-3-phosphocholine. In terms of biological role, transfers a fatty acid residue from the sn-1 position of a phospholipid to the N-linked hydroxyfatty acid chain on the proximal unit of lipid A or its precursors. The protein is Lipid A acyltransferase PagP of Citrobacter koseri (strain ATCC BAA-895 / CDC 4225-83 / SGSC4696).